Here is a 211-residue protein sequence, read N- to C-terminus: N-(5'-phosphoribosyl)anthranilate isomerase (211 aa).

The protein belongs to the TrpF family.

The catalysed reaction is N-(5-phospho-beta-D-ribosyl)anthranilate = 1-(2-carboxyphenylamino)-1-deoxy-D-ribulose 5-phosphate. It participates in amino-acid biosynthesis; L-tryptophan biosynthesis; L-tryptophan from chorismate: step 3/5. This chain is N-(5'-phosphoribosyl)anthranilate isomerase, found in Pseudomonas aeruginosa (strain LESB58).